Here is a 189-residue protein sequence, read N- to C-terminus: Elongation factor P (189 aa).

The protein belongs to the elongation factor P family.

It localises to the cytoplasm. It functions in the pathway protein biosynthesis; polypeptide chain elongation. Functionally, involved in peptide bond synthesis. Stimulates efficient translation and peptide-bond synthesis on native or reconstituted 70S ribosomes in vitro. Probably functions indirectly by altering the affinity of the ribosome for aminoacyl-tRNA, thus increasing their reactivity as acceptors for peptidyl transferase. The protein is Elongation factor P of Phytoplasma australiense.